The following is a 645-amino-acid chain: MYFPSWLSQLYRGLSRPIRRTTQPIWGSLYRSLLQSSQRRIPEFSSFVVRTNTCGELRSSHLGQEVTLCGWIQYRRQNTFLVLRDFDGLVQVIIPQDESAASVKKILCEAPVESVVQVSGTVISRPAGQENPKMPTGEIEIKVKTAELLNACKKLPFEIKNFVKKTEALRLQYRYLDLRSFQMQYNLRLRSQMVMKMREYLCNLHGFVDIETPTLFKRTPGGAKEFLVPSREPGKFYSLPQSPQQFKQLLMVGGLDRYFQVARCYRDEGSRPDRQPEFTQIDIEMSFVDQTGIQSLIEGLLQYSWPNDKDPVVVPFPTMTFAEVLATYGTDKPDTRFGMKIIDISDVFRNTEIGFLQDALSKPHGTVKAICIPEGAKYLKRKDIESIRNFAADHFNQEILPVFLNANRNWNSPVANFIMESQRLELIRLMETQEEDVVLLTAGEHNKACSLLGKLRLECADLLETRGVVLRDPTLFSFLWVVDFPLFLPKEENPRELESAHHPFTAPHPSDIHLLYTEPKKARSQHYDLVLNGNEIGGGSIRIHNAELQRYILATLLKEDVKMLSHLLQALDYGAPPHGGIALGLDRLICLVTGSPSIRDVIAFPKSFRGHDLMSNTPDSVPPEELKPYHIRVSKPTDSKAERAH.

The N-terminal 47 residues, 1–47 (MYFPSWLSQLYRGLSRPIRRTTQPIWGSLYRSLLQSSQRRIPEFSSF), are a transit peptide targeting the mitochondrion. A Phosphothreonine modification is found at Thr-219. Ser-242 carries the phosphoserine modification. The segment at 244-247 (QQFK) is aspartate. An L-aspartate-binding site is contributed by Arg-266. 266–268 (RDE) is an ATP binding site. The residue at position 382 (Lys-382) is an N6-acetyllysine. Residue Glu-535 coordinates ATP. Arg-542 is an L-aspartate binding site. An ATP-binding site is contributed by 584-587 (GLDR).

The protein belongs to the class-II aminoacyl-tRNA synthetase family. Type 1 subfamily. In terms of assembly, homodimer.

It is found in the mitochondrion matrix. It localises to the mitochondrion membrane. The enzyme catalyses tRNA(Asp) + L-aspartate + ATP = L-aspartyl-tRNA(Asp) + AMP + diphosphate. Functionally, catalyzes the attachment of aspartate to tRNA(Asp) in a two-step reaction: aspartate is first activated by ATP to form Asp-AMP and then transferred to the acceptor end of tRNA(Asp). The sequence is that of Aspartate--tRNA ligase, mitochondrial (DARS2) from Homo sapiens (Human).